A 139-amino-acid polypeptide reads, in one-letter code: Nucleoside diphosphate kinase (139 aa).

6 residues coordinate ATP: lysine 11, phenylalanine 59, arginine 87, threonine 93, arginine 104, and asparagine 114. The active-site Pros-phosphohistidine intermediate is the histidine 117.

The protein belongs to the NDK family. As to quaternary structure, homotetramer. The cofactor is Mg(2+).

The protein resides in the cytoplasm. The catalysed reaction is a 2'-deoxyribonucleoside 5'-diphosphate + ATP = a 2'-deoxyribonucleoside 5'-triphosphate + ADP. It catalyses the reaction a ribonucleoside 5'-diphosphate + ATP = a ribonucleoside 5'-triphosphate + ADP. Functionally, major role in the synthesis of nucleoside triphosphates other than ATP. The ATP gamma phosphate is transferred to the NDP beta phosphate via a ping-pong mechanism, using a phosphorylated active-site intermediate. The protein is Nucleoside diphosphate kinase of Wolbachia sp. subsp. Drosophila simulans (strain wRi).